A 657-amino-acid polypeptide reads, in one-letter code: DNA mismatch repair protein MutL (657 aa).

This sequence belongs to the DNA mismatch repair MutL/HexB family.

Its function is as follows. This protein is involved in the repair of mismatches in DNA. It is required for dam-dependent methyl-directed DNA mismatch repair. May act as a 'molecular matchmaker', a protein that promotes the formation of a stable complex between two or more DNA-binding proteins in an ATP-dependent manner without itself being part of a final effector complex. The polypeptide is DNA mismatch repair protein MutL (Streptococcus agalactiae serotype Ia (strain ATCC 27591 / A909 / CDC SS700)).